Here is a 99-residue protein sequence, read N- to C-terminus: Putative endopeptidase RzpR (99 aa).

The sequence is that of Putative endopeptidase RzpR (rzpR) from Escherichia coli (strain K12).